A 188-amino-acid chain; its full sequence is UPF0301 protein Smal_0940 (188 aa).

This sequence belongs to the UPF0301 (AlgH) family.

The chain is UPF0301 protein Smal_0940 from Stenotrophomonas maltophilia (strain R551-3).